The following is a 306-amino-acid chain: Agmatinase (306 aa).

6 residues coordinate Mn(2+): histidine 126, aspartate 149, histidine 151, aspartate 153, aspartate 230, and aspartate 232.

The protein belongs to the arginase family. Agmatinase subfamily. The cofactor is Mn(2+).

It carries out the reaction agmatine + H2O = urea + putrescine. It participates in amine and polyamine biosynthesis; putrescine biosynthesis via agmatine pathway; putrescine from agmatine: step 1/1. Its function is as follows. Catalyzes the formation of putrescine from agmatine. In Escherichia coli (strain SE11), this protein is Agmatinase.